The primary structure comprises 1051 residues: Carbamoyl phosphate synthase large chain (1051 aa).

Positions 1–399 (MKETPKKVLV…SLQKAVRMLD (399 aa)) are carboxyphosphate synthetic domain. ATP contacts are provided by arginine 127, arginine 167, glycine 173, glycine 174, lysine 206, leucine 208, glutamate 213, glycine 239, valine 240, histidine 241, glutamine 282, and glutamate 296. In terms of domain architecture, ATP-grasp 1 spans 131–325 (RETMIENNLP…LAYVSAKLAL (195 aa)). Glutamine 282, glutamate 296, and asparagine 298 together coordinate Mg(2+). Positions 282, 296, and 298 each coordinate Mn(2+). The oligomerization domain stretch occupies residues 400–548 (IGEPGVVGGK…LTYNGTEDDL (149 aa)). The tract at residues 549–930 (EFSQGNKLLI…LKSWLSSIPN (382 aa)) is carbamoyl phosphate synthetic domain. An ATP-grasp 2 domain is found at 673–863 (SKLLDKLGIS…LINESMKAIF (191 aa)). Arginine 709, lysine 748, isoleucine 750, glutamate 755, glycine 779, valine 780, histidine 781, serine 782, glutamine 822, and glutamate 834 together coordinate ATP. Mg(2+) contacts are provided by glutamine 822, glutamate 834, and asparagine 836. Mn(2+)-binding residues include glutamine 822, glutamate 834, and asparagine 836. The MGS-like domain maps to 930 to 1051 (NRIPNKNGIA…FEISEYGGGI (122 aa)). Residues 931–1051 (RIPNKNGIAL…FEISEYGGGI (121 aa)) form an allosteric domain region.

Belongs to the CarB family. As to quaternary structure, composed of two chains; the small (or glutamine) chain promotes the hydrolysis of glutamine to ammonia, which is used by the large (or ammonia) chain to synthesize carbamoyl phosphate. Tetramer of heterodimers (alpha,beta)4. Mg(2+) serves as cofactor. Requires Mn(2+) as cofactor.

The enzyme catalyses hydrogencarbonate + L-glutamine + 2 ATP + H2O = carbamoyl phosphate + L-glutamate + 2 ADP + phosphate + 2 H(+). The catalysed reaction is hydrogencarbonate + NH4(+) + 2 ATP = carbamoyl phosphate + 2 ADP + phosphate + 2 H(+). The protein operates within amino-acid biosynthesis; L-arginine biosynthesis; carbamoyl phosphate from bicarbonate: step 1/1. Its pathway is pyrimidine metabolism; UMP biosynthesis via de novo pathway; (S)-dihydroorotate from bicarbonate: step 1/3. Its function is as follows. Large subunit of the glutamine-dependent carbamoyl phosphate synthetase (CPSase). CPSase catalyzes the formation of carbamoyl phosphate from the ammonia moiety of glutamine, carbonate, and phosphate donated by ATP, constituting the first step of 2 biosynthetic pathways, one leading to arginine and/or urea and the other to pyrimidine nucleotides. The large subunit (synthetase) binds the substrates ammonia (free or transferred from glutamine from the small subunit), hydrogencarbonate and ATP and carries out an ATP-coupled ligase reaction, activating hydrogencarbonate by forming carboxy phosphate which reacts with ammonia to form carbamoyl phosphate. This chain is Carbamoyl phosphate synthase large chain, found in Saccharolobus islandicus (strain M.16.27) (Sulfolobus islandicus).